We begin with the raw amino-acid sequence, 629 residues long: Sushi domain-containing protein 5 (629 aa).

The first 35 residues, 1–35 (MTAEGPSPPARWHRRLPGLWAAALLLLGLPRLSVR), serve as a signal peptide directing secretion. Residues 36–574 (ADGKFFVLES…DGCPGLSRGP (539 aa)) lie on the Extracellular side of the membrane. The Link domain maps to 39–134 (KFFVLESQNG…GGTYSALCIK (96 aa)). 3 disulfides stabilise this stretch: C61-C132, C140-C184, and C167-C197. A Sushi domain is found at 138-199 (KPCGDPPSFP…WYGLVQACGK (62 aa)). Positions 225-249 (EDSRTEADEDRGQGDSSEEAPKQDR) are enriched in basic and acidic residues. 2 disordered regions span residues 225 to 252 (EDSRTEADEDRGQGDSSEEAPKQDRLVS) and 344 to 403 (DGPS…GLDE). The helical transmembrane segment at 575-595 (VIATIVTVLCLLLLLAGVGMV) threads the bilayer. The Cytoplasmic segment spans residues 596–629 (WGYRKCQHKSSVYKLNVGQRQARHYHQQIEMEKV).

It localises to the membrane. This is Sushi domain-containing protein 5 (SUSD5) from Homo sapiens (Human).